Reading from the N-terminus, the 168-residue chain is Mitochondrial ATP-independent inner membrane protease subunit 1a (168 aa).

A mitochondrion-targeting transit peptide spans 1-47 (MRMTFLSYLKQWRGTAKEAFENVSIVAKFLCLLHVTDRYIISTTHVH). Active-site residues include S50 and K94.

This sequence belongs to the peptidase S26 family. IMP1 subfamily. In terms of assembly, heterodimer of 2 subunits, IMP1A/B and IMP12.

Its subcellular location is the mitochondrion inner membrane. Its function is as follows. Catalyzes the removal of transit peptides required for the targeting of proteins from the mitochondrial matrix, across the inner membrane, into the inter-membrane space. This Arabidopsis thaliana (Mouse-ear cress) protein is Mitochondrial ATP-independent inner membrane protease subunit 1a.